The following is a 91-amino-acid chain: Putative pterin-4-alpha-carbinolamine dehydratase (91 aa).

It belongs to the pterin-4-alpha-carbinolamine dehydratase family.

It catalyses the reaction (4aS,6R)-4a-hydroxy-L-erythro-5,6,7,8-tetrahydrobiopterin = (6R)-L-erythro-6,7-dihydrobiopterin + H2O. This chain is Putative pterin-4-alpha-carbinolamine dehydratase, found in Sulfolobus acidocaldarius (strain ATCC 33909 / DSM 639 / JCM 8929 / NBRC 15157 / NCIMB 11770).